We begin with the raw amino-acid sequence, 80 residues long: Type VII secretion system accessory factor EsaB (80 aa).

Belongs to the EsaB family.

Its subcellular location is the cytoplasm. Functionally, seems to regulate secreted factors that contribute to the establishment of persistent infections in the host. The polypeptide is Type VII secretion system accessory factor EsaB (Staphylococcus aureus (strain COL)).